The chain runs to 205 residues: MFLRHCITFTLIALLAGCAGFGSREALQGHGDPQQWRAHKAQLSSLDGWQINGKVGIRAPRDSGSGTLFWLQRQDYYDIRLAGPLGRGAARLTGRPGGVVLEVANQGRYEATSPEALLEEQLGWQLPVSHLVWWVRGLPAPDSKSKLTLDGDSRLASLDQDGWQVQYLSYTEQNGYWLPERLKLHGKDLDVTLVVKDWQPRQLGH.

An N-terminal signal peptide occupies residues 1–17 (MFLRHCITFTLIALLAG). The N-palmitoyl cysteine moiety is linked to residue Cys18. The S-diacylglycerol cysteine moiety is linked to residue Cys18.

This sequence belongs to the LolB family. In terms of assembly, monomer.

Its subcellular location is the cell outer membrane. Its function is as follows. Plays a critical role in the incorporation of lipoproteins in the outer membrane after they are released by the LolA protein. This is Outer-membrane lipoprotein LolB from Pseudomonas putida (strain ATCC 47054 / DSM 6125 / CFBP 8728 / NCIMB 11950 / KT2440).